Consider the following 757-residue polypeptide: Xaa-Pro dipeptidyl-peptidase (757 aa).

Active-site charge relay system residues include Ser-348, Asp-468, and His-498.

This sequence belongs to the peptidase S15 family. In terms of assembly, homodimer.

It localises to the cytoplasm. It carries out the reaction Hydrolyzes Xaa-Pro-|- bonds to release unblocked, N-terminal dipeptides from substrates including Ala-Pro-|-p-nitroanilide and (sequentially) Tyr-Pro-|-Phe-Pro-|-Gly-Pro-|-Ile.. Functionally, removes N-terminal dipeptides sequentially from polypeptides having unsubstituted N-termini provided that the penultimate residue is proline. The chain is Xaa-Pro dipeptidyl-peptidase from Streptococcus pneumoniae (strain ATCC BAA-255 / R6).